We begin with the raw amino-acid sequence, 402 residues long: UPF0597 protein THA_1286 (402 aa).

Belongs to the UPF0597 family.

The polypeptide is UPF0597 protein THA_1286 (Thermosipho africanus (strain TCF52B)).